The primary structure comprises 271 residues: Bifunctional protein FolD (271 aa).

NADP(+) is bound by residues 154-156, serine 181, and isoleucine 222; that span reads GRS.

Belongs to the tetrahydrofolate dehydrogenase/cyclohydrolase family. In terms of assembly, homodimer.

The catalysed reaction is (6R)-5,10-methylene-5,6,7,8-tetrahydrofolate + NADP(+) = (6R)-5,10-methenyltetrahydrofolate + NADPH. It catalyses the reaction (6R)-5,10-methenyltetrahydrofolate + H2O = (6R)-10-formyltetrahydrofolate + H(+). It participates in one-carbon metabolism; tetrahydrofolate interconversion. In terms of biological role, catalyzes the oxidation of 5,10-methylenetetrahydrofolate to 5,10-methenyltetrahydrofolate and then the hydrolysis of 5,10-methenyltetrahydrofolate to 10-formyltetrahydrofolate. This chain is Bifunctional protein FolD, found in Thermotoga petrophila (strain ATCC BAA-488 / DSM 13995 / JCM 10881 / RKU-1).